Consider the following 87-residue polypeptide: Large ribosomal subunit protein bL27 (87 aa).

The segment at 1-26 (MAHKKGTGSTRNGRDSNSKRLGVKAY) is disordered.

This sequence belongs to the bacterial ribosomal protein bL27 family.

In Prochlorococcus marinus (strain SARG / CCMP1375 / SS120), this protein is Large ribosomal subunit protein bL27.